The sequence spans 485 residues: Envelope glycoprotein C (485 aa).

An N-terminal signal peptide occupies residues 1–32 (MGLVNIMRFITFAYIICGGFILTRTSGTSASA). The segment covering 28–72 (TSASASPATPTTNTGEGTSSPVTPTYTTSTDSNNSTATNNSTDVN) has biased composition (low complexity). A disordered region spans residues 28-88 (TSASASPATP…TPSHPHSHEN (61 aa)). Residues 33–444 (SPATPTTNTG…DASPIVEDMP (412 aa)) are Virion surface-facing. N-linked (GlcNAc...) asparagine; by host glycans are attached at residues asparagine 60, asparagine 61, asparagine 66, asparagine 67, asparagine 72, asparagine 108, asparagine 116, asparagine 147, asparagine 220, asparagine 225, and asparagine 286. Residues cysteine 92 and cysteine 109 are joined by a disulfide bond. Residues 237 to 330 (PLMDLSVHPS…EWYRDEVSFS (94 aa)) form the Ig-like domain. 3 cysteine pairs are disulfide-bonded: cysteine 256–cysteine 318, cysteine 357–cysteine 416, and cysteine 361–cysteine 390. Residues 445–468 (VLTGIIAVTCGAAALALVVLITAV) traverse the membrane as a helical segment. Over 469 to 485 (CFYCSKPSQVPYKKADF) the chain is Cytoplasmic.

The protein belongs to the herpesviridae glycoprotein C family. As to quaternary structure, interacts with host complement component C3; this interaction inhibits host immune response by disregulating complement cascade.

Its subcellular location is the virion membrane. In terms of biological role, essential for the initial attachment to heparan sulfate moieties of the host cell surface proteoglycans. Also plays a role in host immune evasion by inhibiting the host complement cascade activation. The chain is Envelope glycoprotein C (gC) from Equine herpesvirus 4 (strain 1942) (EHV-4).